The primary structure comprises 475 residues: tRNA modification GTPase MnmE (475 aa).

Residues R24, E81, and K124 each contribute to the (6S)-5-formyl-5,6,7,8-tetrahydrofolate site. A TrmE-type G domain is found at 220–397 (GLSVVLAGQP…MRSELLRLIG (178 aa)). Position 230 (N230) interacts with K(+). GTP contacts are provided by residues 230 to 235 (NVGKSS), 249 to 255 (TPIAGTT), 274 to 277 (DTAG), and 378 to 380 (SAR). Residue S234 coordinates Mg(2+). Positions 249, 251, and 254 each coordinate K(+). T255 contributes to the Mg(2+) binding site. Residue K475 coordinates (6S)-5-formyl-5,6,7,8-tetrahydrofolate.

The protein belongs to the TRAFAC class TrmE-Era-EngA-EngB-Septin-like GTPase superfamily. TrmE GTPase family. In terms of assembly, homodimer. Heterotetramer of two MnmE and two MnmG subunits. It depends on K(+) as a cofactor.

Its subcellular location is the cytoplasm. Its function is as follows. Exhibits a very high intrinsic GTPase hydrolysis rate. Involved in the addition of a carboxymethylaminomethyl (cmnm) group at the wobble position (U34) of certain tRNAs, forming tRNA-cmnm(5)s(2)U34. The protein is tRNA modification GTPase MnmE of Cupriavidus metallidurans (strain ATCC 43123 / DSM 2839 / NBRC 102507 / CH34) (Ralstonia metallidurans).